The chain runs to 434 residues: ATP-dependent protease ATPase subunit HslU (434 aa).

ATP contacts are provided by residues Val-18, 60–65 (GVGKTE), Asp-247, Glu-312, and Arg-384.

The protein belongs to the ClpX chaperone family. HslU subfamily. A double ring-shaped homohexamer of HslV is capped on each side by a ring-shaped HslU homohexamer. The assembly of the HslU/HslV complex is dependent on binding of ATP.

The protein localises to the cytoplasm. ATPase subunit of a proteasome-like degradation complex; this subunit has chaperone activity. The binding of ATP and its subsequent hydrolysis by HslU are essential for unfolding of protein substrates subsequently hydrolyzed by HslV. HslU recognizes the N-terminal part of its protein substrates and unfolds these before they are guided to HslV for hydrolysis. This Bradyrhizobium sp. (strain BTAi1 / ATCC BAA-1182) protein is ATP-dependent protease ATPase subunit HslU.